A 215-amino-acid chain; its full sequence is N-(5'-phosphoribosyl)anthranilate isomerase (215 aa).

Belongs to the TrpF family.

It catalyses the reaction N-(5-phospho-beta-D-ribosyl)anthranilate = 1-(2-carboxyphenylamino)-1-deoxy-D-ribulose 5-phosphate. Its pathway is amino-acid biosynthesis; L-tryptophan biosynthesis; L-tryptophan from chorismate: step 3/5. The chain is N-(5'-phosphoribosyl)anthranilate isomerase from Cellvibrio japonicus (strain Ueda107) (Pseudomonas fluorescens subsp. cellulosa).